A 92-amino-acid chain; its full sequence is SPbeta prophage-derived uncharacterized protein YoqM (92 aa).

The signal sequence occupies residues 1–25 (MKLRKVLTGSVLSLGLLVSASPAFA).

The sequence is that of SPbeta prophage-derived uncharacterized protein YoqM (yoqM) from Bacillus subtilis (strain 168).